The primary structure comprises 541 residues: Glutamyl-tRNA(Gln) amidotransferase subunit B, mitochondrial (541 aa).

The protein belongs to the GatB/GatE family. GatB subfamily. In terms of assembly, subunit of the heterotrimeric GatFAB amidotransferase (AdT) complex, composed of A, B and F subunits.

The protein resides in the mitochondrion. It carries out the reaction L-glutamyl-tRNA(Gln) + L-glutamine + ATP + H2O = L-glutaminyl-tRNA(Gln) + L-glutamate + ADP + phosphate + H(+). In terms of biological role, allows the formation of correctly charged Gln-tRNA(Gln) through the transamidation of misacylated Glu-tRNA(Gln) in the mitochondria. The reaction takes place in the presence of glutamine and ATP through an activated gamma-phospho-Glu-tRNA(Gln). The polypeptide is Glutamyl-tRNA(Gln) amidotransferase subunit B, mitochondrial (Saccharomyces cerevisiae (strain YJM789) (Baker's yeast)).